The chain runs to 570 residues: Laccase-3 (570 aa).

The first 25 residues, 1 to 25, serve as a signal peptide directing secretion; the sequence is MESFRRFSLLSFIALLAYFAFLASA. 2 Plastocyanin-like domains span residues 33 to 149 and 159 to 310; these read VITP…PRLG and RDIP…YVNA. The N-linked (GlcNAc...) asparagine glycan is linked to N79. Residues H83, H85, H128, and H130 each coordinate Cu cation. N188, N298, N332, N383, N393, and N433 each carry an N-linked (GlcNAc...) asparagine glycan. The Plastocyanin-like 3 domain occupies 419 to 554; that stretch reads DFPPVPPVQF…AMVFLVENGR (136 aa). Residues H471, H474, H476, H533, C534, H535, and H539 each contribute to the Cu cation site.

This sequence belongs to the multicopper oxidase family. The cofactor is Cu cation. Mostly expressed in roots and siliques.

It localises to the secreted. Its subcellular location is the extracellular space. The protein resides in the apoplast. The catalysed reaction is 4 hydroquinone + O2 = 4 benzosemiquinone + 2 H2O. Lignin degradation and detoxification of lignin-derived products. In Arabidopsis thaliana (Mouse-ear cress), this protein is Laccase-3 (LAC3).